The primary structure comprises 353 residues: Probable peptide ABC transporter ATP-binding protein y4tS (353 aa).

The 251-residue stretch at 6–256 folds into the ABC transporter domain; sequence LKVESLTKHY…PVHPYTEALI (251 aa). Residue 49 to 56 participates in ATP binding; it reads GESGCGKS.

The protein belongs to the ABC transporter superfamily.

The protein localises to the cell inner membrane. Probably part of a binding-protein-dependent transport system y4tOPQRS for a peptide. Probably responsible for energy coupling to the transport system. The protein is Probable peptide ABC transporter ATP-binding protein y4tS of Sinorhizobium fredii (strain NBRC 101917 / NGR234).